The primary structure comprises 615 residues: Albumin (615 aa).

The N-terminal stretch at 1–18 (MKWVTLISFIFLFSSATS) is a signal peptide. Residues 19–23 (RNLQR) constitute a propeptide that is removed on maturation. Albumin domains follow at residues 22–214 (QRFA…IVMR), 215–407 (EKAK…QLNQ), and 408–605 (HIKE…NLIV). Residue H30 coordinates Cu cation. The Ca(2+) site is built by E33 and D40. 7 disulfides stabilise this stretch: C80–C89, C102–C118, C117–C128, C152–C197, C196–C205, C228–C274, and C273–C281. Ca(2+)-binding residues include E272, D277, E280, and D283. Residue D277 participates in Zn(2+) binding. Intrachain disulfides connect C293–C307, C306–C317, C344–C389, C388–C397, C420–C466, C465–C476, C489–C505, C504–C515, C542–C587, and C586–C595. N-linked (GlcNAc...) asparagine glycosylation occurs at N500.

Belongs to the ALB/AFP/VDB family. In terms of tissue distribution, plasma.

The protein localises to the secreted. Its function is as follows. Binds water, Ca(2+), Na(+), K(+), fatty acids, hormones, bilirubin and drugs. Its main function is the regulation of the colloidal osmotic pressure of blood. In Gallus gallus (Chicken), this protein is Albumin (ALB).